A 422-amino-acid polypeptide reads, in one-letter code: ATP-dependent Clp protease ATP-binding subunit ClpX 1 (422 aa).

The ClpX-type ZB domain occupies 4–57 (DRKNRESGKLLYCSFCGKSQHEVRKLIAGPAVFVCDECVELCNDIIREDLQGSE). Zn(2+)-binding residues include C16, C19, C38, and C41. 120–127 (PTGSGKTL) provides a ligand contact to ATP.

This sequence belongs to the ClpX chaperone family. Component of the ClpX-ClpP complex. Forms a hexameric ring that, in the presence of ATP, binds to fourteen ClpP subunits assembled into a disk-like structure with a central cavity, resembling the structure of eukaryotic proteasomes.

In terms of biological role, ATP-dependent specificity component of the Clp protease. It directs the protease to specific substrates. Can perform chaperone functions in the absence of ClpP. The protein is ATP-dependent Clp protease ATP-binding subunit ClpX 1 of Methylococcus capsulatus (strain ATCC 33009 / NCIMB 11132 / Bath).